A 419-amino-acid chain; its full sequence is 3-phosphoshikimate 1-carboxyvinyltransferase (419 aa).

Positions 21, 22, and 26 each coordinate 3-phosphoshikimate. Lysine 21 is a binding site for phosphoenolpyruvate. Positions 91 and 119 each coordinate phosphoenolpyruvate. Residues serine 164, serine 165, glutamine 166, serine 191, aspartate 305, and lysine 332 each coordinate 3-phosphoshikimate. Glutamine 166 is a phosphoenolpyruvate binding site. Aspartate 305 (proton acceptor) is an active-site residue. Residues arginine 336 and arginine 376 each coordinate phosphoenolpyruvate.

The protein belongs to the EPSP synthase family. As to quaternary structure, monomer.

The protein localises to the cytoplasm. The enzyme catalyses 3-phosphoshikimate + phosphoenolpyruvate = 5-O-(1-carboxyvinyl)-3-phosphoshikimate + phosphate. The protein operates within metabolic intermediate biosynthesis; chorismate biosynthesis. Its function is as follows. Catalyzes the transfer of the enolpyruvyl moiety of phosphoenolpyruvate (PEP) to the 5-hydroxyl of shikimate-3-phosphate (S3P) to produce enolpyruvyl shikimate-3-phosphate and inorganic phosphate. In Methanothermobacter thermautotrophicus (strain ATCC 29096 / DSM 1053 / JCM 10044 / NBRC 100330 / Delta H) (Methanobacterium thermoautotrophicum), this protein is 3-phosphoshikimate 1-carboxyvinyltransferase.